A 738-amino-acid polypeptide reads, in one-letter code: MTDAPFDRADIDALLGARHPDPFACLGPHRVGDATVVRTLLPGALRVRAIAAGGGVLGELRQVDPAGCFAGALPDGQERGERPRYRLSIDWPDARQDVEDAYAFGTLLDEDALARFAAGDPRAALACLGARALDMDGVPGVRFAVWAPGASRVSVVGDFNGWDARRHPMRLRRPWGVWELFVPRIGAGERYKFALRARDGAALPLKADPCACRTEAPPRTASIVADLDALERFGWHDDAWLRARASLDLAHAPVSIYEVHPESWLRVAAEGNRSATWDELAQRLIPYAAGMGFSHVELTPIAEYPFGGSWGYQSLSPFAPSARFGPPEGFARFVEHAHAAGLGVIVDWVPAHFPDDPHGLGKFDGTALFEHADPREGWHPDWHTHVFNVGRREVGAFLIASALAWAHRYHVDGIRVDAVASMLYRDYSRAAGEWVPNVYGGRENLESIAFLKHFNDTLHGPAAPPGVATFAEESTAWPGVTAPTAEHGLGFDFKWNMGWMHDTLAYLREDPIHRRHHHDRLTFGLVYAFSERFVLPLSHDEVVHGKGSLAAKMPGDAWQRLANLRAYFGFMWAHPGKKLLFMGGEFAQWGEFAHDATPQWDLLDAPAHRGVQRLVRDLNRLHAAEPALHALDDRPAGFAWLVGDDRNNSVFAFVRRDDAGRMLVAVCNFTPVPRTDYRLGLPAPGRWAEVLNTDGAAYGGTDAGNGGAVQADEIPAHGERWSAALRLPPLATLWLRPA.

The active-site Nucleophile is the D417. The active-site Proton donor is the E472.

This sequence belongs to the glycosyl hydrolase 13 family. GlgB subfamily. Monomer.

It catalyses the reaction Transfers a segment of a (1-&gt;4)-alpha-D-glucan chain to a primary hydroxy group in a similar glucan chain.. It participates in glycan biosynthesis; glycogen biosynthesis. Catalyzes the formation of the alpha-1,6-glucosidic linkages in glycogen by scission of a 1,4-alpha-linked oligosaccharide from growing alpha-1,4-glucan chains and the subsequent attachment of the oligosaccharide to the alpha-1,6 position. The chain is 1,4-alpha-glucan branching enzyme GlgB from Burkholderia pseudomallei (strain K96243).